A 1135-amino-acid chain; its full sequence is DNA-directed RNA polymerase I subunit RPA2 (1135 aa).

The interval 1–24 (MDPGSRWRNLPSGPSLKHLTDPSY) is disordered. Arginine 180 is an RNA binding site. Residues 194-208 (IRPKWKTRGPGYTQY) are loop B. Residues 236–247 (LNFIYRKELFFL) are loop A. Residue aspartate 367 coordinates RNA. Fork loop regions lie at residues 439 to 453 (LRSK…DSGL) and 474 to 489 (RGAD…VRRL). Aspartate 755 lines the Mg(2+) pocket. Lysine 890 contributes to the RNA binding site. 2 residues coordinate DNA: arginine 1020 and arginine 1036. Serine 1051 is subject to Phosphoserine. The Zn(2+) site is built by cysteine 1070, cysteine 1073, cysteine 1098, and cysteine 1101. The segment at 1070-1101 (CVKCGSLLSPLLEKPPPSWSAMRNRKYNCTLC) adopts a C4-type zinc-finger fold.

The protein belongs to the RNA polymerase beta chain family. Component of the RNA polymerase I (Pol I) complex consisting of 13 subunits: a ten-subunit catalytic core composed of POLR1A/RPA1, POLR1B/RPA2, POLR1C/RPAC1, POLR1D/RPAC2, POLR1H/RPA12, POLR2E/RPABC1, POLR2F/RPABC2, POLR2H/RPABC3, POLR2K/RPABC4 and POLR2L/RPABC5; a mobile stalk subunit POLR1F/RPA43 protruding from the core and additional subunits homologous to general transcription factors POLR1E/RPA49 and POLR1G/RPA34. Part of Pol I pre-initiation complex (PIC), in which Pol I core assembles with RRN3 and promoter-bound UTBF and SL1/TIF-IB complex. Requires Mg(2+) as cofactor.

It localises to the nucleus. Its subcellular location is the nucleolus. The protein localises to the chromosome. The enzyme catalyses RNA(n) + a ribonucleoside 5'-triphosphate = RNA(n+1) + diphosphate. Its function is as follows. Catalytic core component of RNA polymerase I (Pol I), a DNA-dependent RNA polymerase which synthesizes ribosomal RNA precursors using the four ribonucleoside triphosphates as substrates. Transcribes 47S pre-rRNAs from multicopy rRNA gene clusters, giving rise to 5.8S, 18S and 28S ribosomal RNAs. Pol I-mediated transcription cycle proceeds through transcription initiation, transcription elongation and transcription termination stages. During transcription initiation, Pol I pre-initiation complex (PIC) is recruited by the selectivity factor 1 (SL1/TIF-IB) complex bound to the core promoter that precedes an rDNA repeat unit. The PIC assembly bends the promoter favoring the formation of the transcription bubble and promoter escape. Once the polymerase has escaped from the promoter it enters the elongation phase during which RNA is actively polymerized, based on complementarity with the template DNA strand. Highly processive, assembles in structures referred to as 'Miller trees' where many elongating Pol I complexes queue and transcribe the same rDNA coding regions. At terminator sequences downstream of the rDNA gene, PTRF interacts with Pol I and halts Pol I transcription leading to the release of the RNA transcript and polymerase from the DNA. Forms Pol I active center together with the largest subunit POLR1A/RPA1. Appends one nucleotide at a time to the 3' end of the nascent RNA, with POLR1A/RPA1 contributing a Mg(2+)-coordinating DxDGD motif, and POLR1B/RPA2 participating in the coordination of a second Mg(2+) ion and providing lysine residues believed to facilitate Watson-Crick base pairing between the incoming nucleotide and the template base. Typically, Mg(2+) ions direct a 5' nucleoside triphosphate to form a phosphodiester bond with the 3' hydroxyl of the preceding nucleotide of the nascent RNA, with the elimination of pyrophosphate. Has proofreading activity: Pauses and backtracks to allow the cleavage of a missincorporated nucleotide via POLR1H/RPA12. High Pol I processivity is associated with decreased transcription fidelity. The protein is DNA-directed RNA polymerase I subunit RPA2 of Homo sapiens (Human).